Consider the following 118-residue polypeptide: Ribonuclease P protein component (118 aa).

It belongs to the RnpA family. In terms of assembly, consists of a catalytic RNA component (M1 or rnpB) and a protein subunit.

The enzyme catalyses Endonucleolytic cleavage of RNA, removing 5'-extranucleotides from tRNA precursor.. RNaseP catalyzes the removal of the 5'-leader sequence from pre-tRNA to produce the mature 5'-terminus. It can also cleave other RNA substrates such as 4.5S RNA. The protein component plays an auxiliary but essential role in vivo by binding to the 5'-leader sequence and broadening the substrate specificity of the ribozyme. This is Ribonuclease P protein component from Photobacterium profundum (strain SS9).